The chain runs to 274 residues: 2-dehydro-3-deoxyphosphooctonate aldolase (274 aa).

Belongs to the KdsA family.

The protein localises to the cytoplasm. It catalyses the reaction D-arabinose 5-phosphate + phosphoenolpyruvate + H2O = 3-deoxy-alpha-D-manno-2-octulosonate-8-phosphate + phosphate. It participates in carbohydrate biosynthesis; 3-deoxy-D-manno-octulosonate biosynthesis; 3-deoxy-D-manno-octulosonate from D-ribulose 5-phosphate: step 2/3. Its pathway is bacterial outer membrane biogenesis; lipopolysaccharide biosynthesis. The sequence is that of 2-dehydro-3-deoxyphosphooctonate aldolase from Rickettsia typhi (strain ATCC VR-144 / Wilmington).